Reading from the N-terminus, the 166-residue chain is Small ribosomal subunit protein bS18m (166 aa).

A mitochondrion-targeting transit peptide spans 1 to 31; it reads MLGRRIFSPAPNRGFILCNLIQSNNSTRRGF. The interval 29-48 is disordered; it reads RGFSDNRKFNERNSEASSNV. The span at 30–42 shows a compositional bias: basic and acidic residues; it reads GFSDNRKFNERNS.

The protein belongs to the bacterial ribosomal protein bS18 family. As to quaternary structure, component of the mitochondrial small ribosomal subunit (mt-SSU). Mature yeast 74S mitochondrial ribosomes consist of a small (37S) and a large (54S) subunit. The 37S small subunit contains a 15S ribosomal RNA (15S mt-rRNA) and at least 32 different proteins. The 54S large subunit contains a 21S rRNA (21S mt-rRNA) and at least 45 different proteins.

The protein resides in the mitochondrion. Component of the mitochondrial ribosome (mitoribosome), a dedicated translation machinery responsible for the synthesis of mitochondrial genome-encoded proteins, including at least some of the essential transmembrane subunits of the mitochondrial respiratory chain. The mitoribosomes are attached to the mitochondrial inner membrane and translation products are cotranslationally integrated into the membrane. The polypeptide is Small ribosomal subunit protein bS18m (rsm18) (Schizosaccharomyces pombe (strain 972 / ATCC 24843) (Fission yeast)).